The sequence spans 146 residues: Ribonuclease H (146 aa).

The RNase H type-1 domain maps to 4 to 145 (ELNKVVIYTD…ADMLARSQIV (142 aa)). Mg(2+) contacts are provided by D13, E51, D73, and D137.

This sequence belongs to the RNase H family. As to quaternary structure, monomer. It depends on Mg(2+) as a cofactor.

It localises to the cytoplasm. The catalysed reaction is Endonucleolytic cleavage to 5'-phosphomonoester.. Functionally, endonuclease that specifically degrades the RNA of RNA-DNA hybrids. This chain is Ribonuclease H, found in Ehrlichia chaffeensis (strain ATCC CRL-10679 / Arkansas).